The sequence spans 975 residues: Importin-11 (975 aa).

M1 carries the N-acetylmethionine modification. An Importin N-terminal domain is found at 28–100 (AEEQLKQWET…RAGLITNFNE (73 aa)). HEAT repeat units follow at residues 123-160 (RQWP…TLAS), 209-248 (ERTL…RLKQ), 318-356 (VQCM…KMAF), 422-459 (QTLT…AVGL), 473-509 (WFKN…VKFK), 511-548 (DLRP…DFEF), 555-593 (PYLE…RVNM), 600-636 (GCLV…GLGA), 640-677 (NLYP…TLEN), 683-720 (PELL…SSTE), 743-764 (EGQV…ILGP), 765-804 (QMFQ…QNTS), 819-849 (QEMD…KLSA), 850-887 (LALL…EDPE), and 957-974 (METV…FLQG). S343 carries the phosphoserine modification.

This sequence belongs to the importin beta family. In terms of assembly, interacts with UBE2E3 and RPL12.

Its subcellular location is the cytoplasm. It localises to the nucleus. Functions in nuclear protein import as nuclear transport receptor. Serves as receptor for nuclear localization signals (NLS) in cargo substrates. Is thought to mediate docking of the importin/substrate complex to the nuclear pore complex (NPC) through binding to nucleoporin and the complex is subsequently translocated through the pore by an energy requiring, Ran-dependent mechanism. At the nucleoplasmic side of the NPC, Ran binds to the importin, the importin/substrate complex dissociates and importin is re-exported from the nucleus to the cytoplasm where GTP hydrolysis releases Ran. The directionality of nuclear import is thought to be conferred by an asymmetric distribution of the GTP- and GDP-bound forms of Ran between the cytoplasm and nucleus. Mediates the nuclear import of UBE2E3, and of RPL12. The protein is Importin-11 (IPO11) of Homo sapiens (Human).